The chain runs to 460 residues: Cyclin-T1-2 (460 aa).

Disordered regions lie at residues 1–20 (MDEA…SSVA) and 285–345 (QPIS…QDHS). The segment covering 314–324 (SDDHSVHDGSR) has biased composition (basic and acidic residues). Positions 332 to 345 (NSESEAQKNLQDHS) are enriched in polar residues.

Belongs to the cyclin family. Cyclin T subfamily.

The polypeptide is Cyclin-T1-2 (CYCT1-2) (Arabidopsis thaliana (Mouse-ear cress)).